An 84-amino-acid chain; its full sequence is Large ribosomal subunit protein bL27 (84 aa).

The disordered stretch occupies residues 1 to 22; it reads MAHKKGASSTRNGRDSNAQRLG. The segment covering 7–19 has biased composition (polar residues); it reads ASSTRNGRDSNAQ.

The protein belongs to the bacterial ribosomal protein bL27 family.

This chain is Large ribosomal subunit protein bL27, found in Streptomyces avermitilis (strain ATCC 31267 / DSM 46492 / JCM 5070 / NBRC 14893 / NCIMB 12804 / NRRL 8165 / MA-4680).